A 441-amino-acid polypeptide reads, in one-letter code: Matrix extracellular phosphoglycoprotein (441 aa).

A signal peptide spans 1-24 (MTPEGLMKMQAVSVGLLLFSMTWA). Residue Asn-82 is glycosylated (N-linked (GlcNAc...) asparagine). Residues 137-441 (QSSPVKSKHT…SGSSSESHGD (305 aa)) are disordered. A compositionally biased stretch (basic residues) spans 142 to 156 (KSKHTKHTRQTRRST). Positions 178–200 (PDLLVRGDNDVPPFSGDGQHFMH) are dentonin. The short motif at 183-185 (RGD) is the Cell attachment site element. Ser-192 is a glycosylation site (O-linked (Xyl...) (chondroitin sulfate) serine). Residues 211-223 (PESSTSRPLSGSS) show a composition bias toward polar residues. Residues 313–325 (SREKVKGGVEHAG) are compositionally biased toward basic and acidic residues. Composition is skewed to polar residues over residues 349 to 358 (GNQLTLTASQ) and 391 to 405 (GQNN…SQRR). The interval 424-441 (RDSSESSSSGSSSESHGD) is ASARM motif; interaction with PHEX. Residues 428–441 (ESSSSGSSSESHGD) show a composition bias toward low complexity.

This sequence belongs to the PF07175/osteoregulin family. In terms of assembly, interacts (via ASARM motif) with PHEX; the interaction is zinc-dependent. Post-translationally, phosphorylated on serine residues in the ASARM motif; the phosphorylation is important for the inhibition of bone mineralization. Cleaved by CTSB/cathepsin B; the cleavage is blocked by metalloprotease PHEX. Expressed in osteocytes (at protein level). Expressed by chondrocytes, specifically in the hypertrophic zone of the bone growth plate (at protein level). Expressed in osteoblasts in bone (at protein level). Expressed by osteoblasts within the metaphysis (at protein level). Expressed at low levels in white fat, brown fat, testes, brain and aorta. Expressed in the craniofacial complex (at protein level). Expressed in odontoblasts, ameloblasts and in predentin during tooth development (at protein level). Expressed in the kidney (at protein level). Expressed in osteocytes in mandibular condylar cartilage and tibial cartilage (at protein level). Expressed in salivary glands.

The protein localises to the secreted. The protein resides in the extracellular space. It is found in the extracellular matrix. Functionally, regulates renal phosphate and uric acid excretion. Regulates bone mineralization by osteoblasts and cartilage mineralization by chondrocytes. Regulates the mineralization of the extracellular matrix of the craniofacial complex, such as teeth, bone and cartilage. Increases dental pulp stem cell proliferation. The chain is Matrix extracellular phosphoglycoprotein from Mus musculus (Mouse).